Reading from the N-terminus, the 82-residue chain is Small ribosomal subunit protein bS16 (82 aa).

It belongs to the bacterial ribosomal protein bS16 family.

This is Small ribosomal subunit protein bS16 from Crocosphaera subtropica (strain ATCC 51142 / BH68) (Cyanothece sp. (strain ATCC 51142)).